Reading from the N-terminus, the 1071-residue chain is Kinesin-like protein KIN-14J (1071 aa).

Positions 39–142 constitute a Calponin-homology (CH) domain; sequence KKGHQSLVEW…SLKALKASFS (104 aa). The segment at 157-181 is disordered; sequence WSLPEDHSDSRGDDRNFTDGFQSKE. Over residues 158–173 the composition is skewed to basic and acidic residues; it reads SLPEDHSDSRGDDRNF. Positions 299-389 form a coiled coil; sequence EKTRIEEKER…ELEKLCQSKS (91 aa). The Kinesin motor domain maps to 472 to 800; the sequence is NIRVYCRIRP…LKFAERVSGV (329 aa). 556–563 is an ATP binding site; the sequence is GQTGSGKT. The stretch at 811–844 forms a coiled coil; it reads GRDVRQLMEQVSNLKDVIAKKDEELQNFQKVKGN. Disordered regions lie at residues 852–931 and 995–1071; these read GLSN…AAKG and ARMT…NRRR. 2 stretches are compositionally biased toward basic and acidic residues: residues 910–921 and 995–1017; these read SDERKHQKDYHQ and ARMT…KDRT. Positions 1034 to 1049 are enriched in polar residues; sequence TRPSRLSIATSSSSKA.

It belongs to the TRAFAC class myosin-kinesin ATPase superfamily. Kinesin family. KIN-14 subfamily.

The polypeptide is Kinesin-like protein KIN-14J (Arabidopsis thaliana (Mouse-ear cress)).